We begin with the raw amino-acid sequence, 109 residues long: Nucleoid-associated protein YbaB (109 aa).

It belongs to the YbaB/EbfC family. Homodimer.

Its subcellular location is the cytoplasm. The protein localises to the nucleoid. Functionally, binds to DNA and alters its conformation. May be involved in regulation of gene expression, nucleoid organization and DNA protection. The protein is Nucleoid-associated protein YbaB of Escherichia coli O127:H6 (strain E2348/69 / EPEC).